The primary structure comprises 305 residues: UDP-3-O-acyl-N-acetylglucosamine deacetylase (305 aa).

Zn(2+) is bound by residues His-78, His-235, and Asp-239. Residue His-262 is the Proton donor of the active site.

The protein belongs to the LpxC family. Zn(2+) is required as a cofactor.

It catalyses the reaction a UDP-3-O-[(3R)-3-hydroxyacyl]-N-acetyl-alpha-D-glucosamine + H2O = a UDP-3-O-[(3R)-3-hydroxyacyl]-alpha-D-glucosamine + acetate. It functions in the pathway glycolipid biosynthesis; lipid IV(A) biosynthesis; lipid IV(A) from (3R)-3-hydroxytetradecanoyl-[acyl-carrier-protein] and UDP-N-acetyl-alpha-D-glucosamine: step 2/6. Catalyzes the hydrolysis of UDP-3-O-myristoyl-N-acetylglucosamine to form UDP-3-O-myristoylglucosamine and acetate, the committed step in lipid A biosynthesis. This Geobacter sp. (strain M21) protein is UDP-3-O-acyl-N-acetylglucosamine deacetylase.